Reading from the N-terminus, the 87-residue chain is Phosphoribosyl-ATP pyrophosphatase (87 aa).

Belongs to the PRA-PH family.

The protein localises to the cytoplasm. The catalysed reaction is 1-(5-phospho-beta-D-ribosyl)-ATP + H2O = 1-(5-phospho-beta-D-ribosyl)-5'-AMP + diphosphate + H(+). It functions in the pathway amino-acid biosynthesis; L-histidine biosynthesis; L-histidine from 5-phospho-alpha-D-ribose 1-diphosphate: step 2/9. This is Phosphoribosyl-ATP pyrophosphatase from Paenarthrobacter aurescens (strain TC1).